We begin with the raw amino-acid sequence, 503 residues long: MEESQGYLELYKSRQHDFLYPLIFQEYIYVLAHDHGLNRSILLENLGSDNKFSSLIVKRLITRMYQQNRLIISANDSNRNPSLGHNKDLYSQIISEGFAVIVEIPFPLRLVSSLERKEIVKSHNLRSIHSVFPFLEDKFLHLNYVSDILIPHPIHLEILVQTLRYWVKDASSLHLLRFFLYEYRNWNSLINPKKSIFVFSKRNQRLFLFLYNSHVYEYESVFVFLRTQSSHLRSTSSGALLERIYFYGKIKHLVEVFANDFQAILWLFKDTFVHYVRYQGKSILASKGTPLLMNKWKYYLVNFWQCNFYVWSQPVRIYINQLSNHSLYFLGYISSVGLNPSVVRNQMLENSFIIDNAIKKFDIIVPIIPLIGSLAKAKFCNVLGHPISKPARADSSDSDIIDRFVRICKNLSHYHSGSSKKKSLYRIKYILRLSCARTLARKHKSPVRAFLKRLGSELLEEFLTEEEQVLSLIVPASSTSRRLYRGRIWYLDIICINDLANHE.

This sequence belongs to the intron maturase 2 family. MatK subfamily.

Its subcellular location is the plastid. The protein resides in the chloroplast. Usually encoded in the trnK tRNA gene intron. Probably assists in splicing its own and other chloroplast group II introns. The protein is Maturase K of Liquidambar styraciflua (Sweetgum tree).